The sequence spans 123 residues: Large ribosomal subunit protein uL14 (123 aa).

Belongs to the universal ribosomal protein uL14 family. Part of the 50S ribosomal subunit. Forms a cluster with proteins L3 and L19. In the 70S ribosome, L14 and L19 interact and together make contacts with the 16S rRNA in bridges B5 and B8.

Functionally, binds to 23S rRNA. Forms part of two intersubunit bridges in the 70S ribosome. The polypeptide is Large ribosomal subunit protein uL14 (Actinobacillus pleuropneumoniae serotype 7 (strain AP76)).